Reading from the N-terminus, the 187-residue chain is Peptide deformylase (187 aa).

Fe cation-binding residues include Cys107 and His149. Glu150 is a catalytic residue. Position 153 (His153) interacts with Fe cation.

The protein belongs to the polypeptide deformylase family. Requires Fe(2+) as cofactor.

The catalysed reaction is N-terminal N-formyl-L-methionyl-[peptide] + H2O = N-terminal L-methionyl-[peptide] + formate. Its function is as follows. Removes the formyl group from the N-terminal Met of newly synthesized proteins. Requires at least a dipeptide for an efficient rate of reaction. N-terminal L-methionine is a prerequisite for activity but the enzyme has broad specificity at other positions. The chain is Peptide deformylase from Microchaete diplosiphon (Fremyella diplosiphon).